A 554-amino-acid chain; its full sequence is DnaJ homolog subfamily C member 1 (554 aa).

A signal peptide spans M1–G47. The Lumenal segment spans residues W48–E153. The 65-residue stretch at N65–L129 folds into the J domain. Residues L154 to Y174 traverse the membrane as a helical segment. Residues L175–S554 lie on the Cytoplasmic side of the membrane. Positions K325–T379 constitute an SANT 1 domain. S381 is subject to Phosphoserine. Residues S392–T405 show a composition bias toward polar residues. Residues S392–N500 form a disordered region. Residues A421 to E432 are compositionally biased toward acidic residues. The residue at position 430 (S430) is a Phosphoserine. Residues A455–D472 are compositionally biased toward basic and acidic residues. Residues I473–E482 are compositionally biased toward acidic residues. Phosphoserine occurs at positions 479, 480, 484, and 492. A compositionally biased stretch (basic and acidic residues) spans E483–E494. The SANT 2 domain occupies S492–Q547.

In terms of assembly, interacts (via J domain) with HSPA5. Interacts (via cytosolic domain) with ribosomes. Interacts (via SANT 2 domain) with SERPINA3; the interaction delays the formation of the covalent inhibitory complex SERPINA3-chymotrypsin, but does not alter the catalytic activity of SERPINA3. Interacts (via SANT 2 domain) with ITIH4 (via C-terminus); the interaction protects ITIH4 against in vitro cleavage by kallikrein.

It localises to the endoplasmic reticulum membrane. The protein localises to the nucleus membrane. Its subcellular location is the microsome membrane. Its function is as follows. May modulate protein synthesis. The protein is DnaJ homolog subfamily C member 1 (DNAJC1) of Homo sapiens (Human).